Here is a 184-residue protein sequence, read N- to C-terminus: MRTLLASPRGALVKDDRLLPFLLRGKTLVTVGDVTTKRCLELGLVPRTAIFDGKTRRSQWVELRAPNGVLKAFNPPGQICLDAAKVVKKAILTSTWVKVEGEEDLLAIPALLSSENGWALLYGQPKAGVVLVEINKYTKLHFLEIIKMFDGDVEEFLREFDYDPNQPLLGELDERLYDLLFPEL.

Positions 33, 34, 52, 54, and 103 each coordinate GTP.

This sequence belongs to the GTP-dependent DPCK family.

The catalysed reaction is 3'-dephospho-CoA + GTP = GDP + CoA + H(+). It functions in the pathway cofactor biosynthesis; coenzyme A biosynthesis. Catalyzes the GTP-dependent phosphorylation of the 3'-hydroxyl group of dephosphocoenzyme A to form coenzyme A (CoA). The protein is GTP-dependent dephospho-CoA kinase of Ignicoccus hospitalis (strain KIN4/I / DSM 18386 / JCM 14125).